A 305-amino-acid chain; its full sequence is Peroxisome biogenesis factor 2 (305 aa).

Residues 1 to 15 are Peroxisomal matrix-facing; the sequence is MAAREESTQSANRVL. A helical transmembrane segment spans residues 16–42; that stretch reads RISQLDALELNKALEQLVWSQFTQCFH. Topologically, residues 43-48 are cytoplasmic; it reads GFKPGL. Residues 49–74 traverse the membrane as a helical segment; it reads LARFEPEVKAFLWLFLWRFTIYSKNA. Residues 75–98 are Peroxisomal matrix-facing; the sequence is TVGQSVLNIQHKNDSSPNPVYQPP. Residues 99–125 form a helical membrane-spanning segment; that stretch reads SKNQKLLYAVCTIGGRWLEERCYDLFR. At 126–133 the chain is on the cytoplasmic side; the sequence is NRHLASFG. Residues 134 to 160 form a helical membrane-spanning segment; the sequence is KAKQCMNFVVGLLKLGELMNFLIFLQK. Topologically, residues 161–187 are peroxisomal matrix; sequence GKFATLTERLLGIHSVFCKPQNMREVG. The chain crosses the membrane as a helical span at residues 188-211; the sequence is FEYMNRELLWHGFAEFLIFLLPLI. Residues 212 to 305 lie on the Cytoplasmic side of the membrane; the sequence is NIQKLKAKLS…GIQMSEVNAL (94 aa). Residues Cys244, Cys247, Cys259, His261, Cys264, Cys267, Cys280, and Cys283 each coordinate Zn(2+). The RING-type zinc-finger motif lies at 244 to 284; sequence CALCGEWPTMPHTIGCEHVFCYYCVKSSFLFDIYFTCPKCG.

This sequence belongs to the pex2/pex10/pex12 family. In terms of assembly, component of the PEX2-PEX10-PEX12 retrotranslocation channel, composed of PEX2, PEX10 and PEX12. Forms intramolecular and intermolecular disulfide bonds in response to reactive oxygen species (ROS), promoting higher stability.

It is found in the peroxisome membrane. It carries out the reaction [E2 ubiquitin-conjugating enzyme]-S-ubiquitinyl-L-cysteine + [acceptor protein]-L-cysteine = [E2 ubiquitin-conjugating enzyme]-L-cysteine + [acceptor protein]-S-ubiquitinyl-L-cysteine.. The enzyme catalyses S-ubiquitinyl-[E2 ubiquitin-conjugating enzyme]-L-cysteine + [acceptor protein]-L-lysine = [E2 ubiquitin-conjugating enzyme]-L-cysteine + N(6)-ubiquitinyl-[acceptor protein]-L-lysine.. Its pathway is protein modification; protein ubiquitination. In terms of biological role, E3 ubiquitin-protein ligase component of a retrotranslocation channel required for peroxisome organization by mediating export of the PEX5 receptor from peroxisomes to the cytosol, thereby promoting PEX5 recycling. The retrotranslocation channel is composed of PEX2, PEX10 and PEX12; each subunit contributing transmembrane segments that coassemble into an open channel that specifically allows the passage of PEX5 through the peroxisomal membrane. PEX2 also regulates peroxisome organization by acting as a E3 ubiquitin-protein ligase. PEX2 ubiquitinates PEX5 during its passage through the retrotranslocation channel: catalyzes monoubiquitination of PEX5 at 'Cys-11', a modification that acts as a signal for PEX5 extraction into the cytosol. Required for pexophagy in response to starvation by mediating ubiquitination of peroxisomal proteins, such as PEX5 and ABCD3/PMP70. Also involved in the response to reactive oxygen species (ROS) by mediating 'Lys-48'-linked polyubiquitination and subsequent degradation of PNPLA2/ATGL, thereby regulating lipolysis. The protein is Peroxisome biogenesis factor 2 of Mus musculus (Mouse).